The chain runs to 607 residues: MGLFGSFGARNKATPQVPPGAVAKAPEGTPKGPETNDQPDMDSSRLSLEARNEKEIEQHPNQVTADAHLGVQKVEAAALVWSKKAVWATYAWIWVCFFLLALQSGISGNVINNAYSGFMSAPQISTANILSSIIGGVLKLPIAKILNLWGRAEGFLVFVGVYTIGLIILAACNGPDSYAAGYVLFWIGYDAIYLILDVFVADTSGLRNRAFTFAFASTPFICTAFTAPLAASSFLRMTTWRWAYGAFAIIMPVALAPLAVVFKRYQLKAEKMGLYVRQPSGRTWAQSVAHYIHEFDIIGAFLLMAAWVLLLLPFSLASNGRAEYKSAAFIAMVIIGFCLFFAFAAWEKWFARVHFINYELLKQRTVLGACVMAATLYFSFYCWDLYFYNFCTVVYNLNAAMTGYMTQIYNVGSCFWGVVFGLWVRWTKHFKHTCLFFGLPLMILGAGLMIHFRGQSDDIGYVIMCQIFIAFGGGTLVIGEQMAVMASANREGVPMMLSFIGLFSSLGGAIGYAVAAAIYTNVFPGALESRLPADLKSNATSIYMGGYTVQQTYPMGSAARDAINYAWGRSQRFGAVAATCILILGIPAIAVWKNYNVNKHQNKGVMI.

A disordered region spans residues 1 to 46 (MGLFGSFGARNKATPQVPPGAVAKAPEGTPKGPETNDQPDMDSSRL). The next 13 helical transmembrane spans lie at 86–106 (VWAT…QSGI), 129–149 (ILSS…LNLW), 152–172 (AEGF…LAAC), 180–200 (AGYV…DVFV), 210–230 (AFTF…APLA), 242–262 (WAYG…AVVF), 297–317 (IIGA…FSLA), 326–346 (SAAF…FAAW), 367–387 (LGAC…DLYF), 404–424 (YMTQ…GLWV), 432–452 (HTCL…MIHF), 459–479 (IGYV…LVIG), and 499–519 (FIGL…AAIY). The N-linked (GlcNAc...) asparagine glycan is linked to Asn-538. The chain crosses the membrane as a helical span at residues 573-593 (FGAVAATCILILGIPAIAVWK).

The protein belongs to the major facilitator superfamily.

The protein resides in the cell membrane. Its function is as follows. Major facilitator transporter involved in ferrichrome (FC) uptake. The sequence is that of Siderochrome iron transporter 2 from Aspergillus fumigatus (strain ATCC MYA-4609 / CBS 101355 / FGSC A1100 / Af293) (Neosartorya fumigata).